Consider the following 409-residue polypeptide: Shaggy-related protein kinase gamma (409 aa).

Ala2 is subject to N-acetylalanine. The region spanning 73–357 is the Protein kinase domain; that stretch reads YMAERVVGHG…ALDSLVHPFF (285 aa). Residues 79 to 87 and Lys102 each bind ATP; that span reads VGHGSFGVV. Asp198 serves as the catalytic Proton acceptor. Tyr233 carries the phosphotyrosine modification.

It belongs to the protein kinase superfamily. CMGC Ser/Thr protein kinase family. GSK-3 subfamily. As to quaternary structure, binds to KIB1. Component of a complex made of POLAR, BASL, ASK7/BIN2 and ASK3/SK12. Binds to POLAR and BASL. In terms of processing, autophosphorylated mainly on threonine and serine residues. In terms of tissue distribution, roots, shoots and leaves.

It is found in the cytoplasm. The protein localises to the cell cortex. It carries out the reaction L-seryl-[protein] + ATP = O-phospho-L-seryl-[protein] + ADP + H(+). The catalysed reaction is L-threonyl-[protein] + ATP = O-phospho-L-threonyl-[protein] + ADP + H(+). Functionally, may mediate extracellular signals to regulate transcription in differentiating cells. Probably involved first at the cortical polarity site, to restrict MAPK signaling and promote asymmetric cell division (ACD), and second in the nucleus of stomatal lineage ground cells (SLGCs) or meristemoids, to limit cell division and to promote differentiation into pavement or stomatal guard cells, respectively. Phosphorylate YDA and SPCH in vitro. In Arabidopsis thaliana (Mouse-ear cress), this protein is Shaggy-related protein kinase gamma.